Reading from the N-terminus, the 230-residue chain is 7-cyano-7-deazaguanine synthase (230 aa).

14 to 24 (LSGGLDSTTTL) serves as a coordination point for ATP. Zn(2+) is bound by residues Cys-194, Cys-204, Cys-207, and Cys-210.

The protein belongs to the QueC family. Requires Zn(2+) as cofactor.

The catalysed reaction is 7-carboxy-7-deazaguanine + NH4(+) + ATP = 7-cyano-7-deazaguanine + ADP + phosphate + H2O + H(+). It functions in the pathway purine metabolism; 7-cyano-7-deazaguanine biosynthesis. Catalyzes the ATP-dependent conversion of 7-carboxy-7-deazaguanine (CDG) to 7-cyano-7-deazaguanine (preQ(0)). The chain is 7-cyano-7-deazaguanine synthase from Ruthia magnifica subsp. Calyptogena magnifica.